Reading from the N-terminus, the 622-residue chain is Polypeptide N-acetylgalactosaminyltransferase 18 (622 aa).

The Cytoplasmic portion of the chain corresponds to 1–12 (MVCTRKTKTLVS). A helical; Signal-anchor for type II membrane protein membrane pass occupies residues 13–35 (TCVILSGMTNIICLLYVGWVTNY). Topologically, residues 36–622 (IASVYVRGQE…ITNVLRSLVS (587 aa)) are lumenal. 5 cysteine pairs are disulfide-bonded: Cys144–Cys392, Cys383–Cys462, Cys497–Cys513, Cys545–Cys558, and Cys586–Cys606. An N-linked (GlcNAc...) asparagine glycan is attached at Asn146. The catalytic subdomain A stretch occupies residues 153 to 267 (LPEVSIVFIF…VGWAEPVLTR (115 aa)). Residue Asp194 coordinates substrate. An N-linked (GlcNAc...) asparagine glycan is attached at Asn195. Mn(2+) contacts are provided by Asp251 and His253. Asn320 carries N-linked (GlcNAc...) asparagine glycosylation. The catalytic subdomain B stretch occupies residues 324–400 (PIRSPALIGC…PCSRIAHIER (77 aa)). His397 provides a ligand contact to Mn(2+). The substrate site is built by Arg400 and Tyr405. A Ricin B-type lectin domain is found at 484-614 (AYGVLQNSLK…KCSGQHWTIT (131 aa)).

The protein belongs to the glycosyltransferase 2 family. GalNAc-T subfamily. It depends on Mn(2+) as a cofactor.

Its subcellular location is the golgi apparatus membrane. The catalysed reaction is L-seryl-[protein] + UDP-N-acetyl-alpha-D-galactosamine = a 3-O-[N-acetyl-alpha-D-galactosaminyl]-L-seryl-[protein] + UDP + H(+). The enzyme catalyses L-threonyl-[protein] + UDP-N-acetyl-alpha-D-galactosamine = a 3-O-[N-acetyl-alpha-D-galactosaminyl]-L-threonyl-[protein] + UDP + H(+). The protein operates within protein modification; protein glycosylation. Catalyzes the initial reaction in O-linked oligosaccharide biosynthesis, the transfer of an N-acetyl-D-galactosamine (GalNAc) residue from UDP-GalNAc to a serine or threonine residue on the protein receptor. In Mus musculus (Mouse), this protein is Polypeptide N-acetylgalactosaminyltransferase 18 (Galnt18).